An 813-amino-acid polypeptide reads, in one-letter code: Raf homolog serine/threonine-protein kinase (813 aa).

The disordered stretch occupies residues 1 to 79; the sequence is MSRINFKKSS…GGAGTSDKEP (79 aa). Over residues 9-23 the composition is skewed to low complexity; that stretch reads SSASTTPTSPHCPSP. In terms of domain architecture, RBD spans 85-161; that stretch reads KMIMVHLPFD…PGNELWVHSE (77 aa). The Phorbol-ester/DAG-type zinc-finger motif lies at 170–217; the sequence is KHAIVRRTFIPPKSCDVCNNPIWMMGFRCEFCQFKFHQRCSSFAPLYC. The Zn(2+) site is built by Cys-184, Cys-187, Cys-198, Cys-201, His-206, Cys-209, and Cys-217. 2 stretches are compositionally biased toward polar residues: residues 258–273 and 291–301; these read TSGQ…SHPD and SPQNETSQLSP. Disordered regions lie at residues 258–315, 338–358, and 383–472; these read TSGQ…SAPN, QRLE…QARH, and TPLG…PHHE. The span at 338 to 348 shows a compositional bias: basic and acidic residues; the sequence is QRLEEESRDKT. Over residues 386 to 399 the composition is skewed to low complexity; that stretch reads GSNSPSSTCSSPPG. The segment covering 406–421 has biased composition (polar residues); that stretch reads TLGQSPNVSGSTTSSL. Residues 453-462 show a composition bias toward basic and acidic residues; that stretch reads SPGERLDAQR. The 268-residue stretch at 481-748 folds into the Protein kinase domain; it reads FIIQYKVGSG…VLERLRDIIL (268 aa). ATP is bound by residues 487–495 and Lys-507; that span reads VGSGSFGTV. Asp-602 functions as the Proton acceptor in the catalytic mechanism.

This sequence belongs to the protein kinase superfamily. TKL Ser/Thr protein kinase family. RAF subfamily. In terms of assembly, interacts with cdf-1 in a zinc-dependent manner which promotes its activity. The cofactor is Zn(2+).

It catalyses the reaction L-seryl-[protein] + ATP = O-phospho-L-seryl-[protein] + ADP + H(+). The enzyme catalyses L-threonyl-[protein] + ATP = O-phospho-L-threonyl-[protein] + ADP + H(+). In terms of biological role, protein kinase that participates in the induction of vulva and has roles in fertility and viability. Acts downstream of the Ras protein let-60. Required for progression of developing oocytes through the pachytene stage. Plays a role in responses to M.nematophilum-mediated bacterial infection by promoting tail swelling and preventing constipation. Positively regulates lifespan upstream of mek-2 and mpk-1. This is Raf homolog serine/threonine-protein kinase (lin-45) from Caenorhabditis elegans.